A 411-amino-acid polypeptide reads, in one-letter code: NADH-quinone oxidoreductase subunit D (411 aa).

It belongs to the complex I 49 kDa subunit family. In terms of assembly, NDH-1 is composed of 14 different subunits. Subunits NuoB, C, D, E, F, and G constitute the peripheral sector of the complex.

The protein localises to the cell inner membrane. It catalyses the reaction a quinone + NADH + 5 H(+)(in) = a quinol + NAD(+) + 4 H(+)(out). In terms of biological role, NDH-1 shuttles electrons from NADH, via FMN and iron-sulfur (Fe-S) centers, to quinones in the respiratory chain. The immediate electron acceptor for the enzyme in this species is believed to be ubiquinone. Couples the redox reaction to proton translocation (for every two electrons transferred, four hydrogen ions are translocated across the cytoplasmic membrane), and thus conserves the redox energy in a proton gradient. This chain is NADH-quinone oxidoreductase subunit D, found in Phenylobacterium zucineum (strain HLK1).